A 512-amino-acid polypeptide reads, in one-letter code: GMP synthase [glutamine-hydrolyzing] (512 aa).

In terms of domain architecture, Glutamine amidotransferase type-1 spans 5–195 (GIVILDFGSQ…IFGIAKAEKN (191 aa)). C82 acts as the Nucleophile in catalysis. Residues H169 and E171 contribute to the active site. In terms of domain architecture, GMPS ATP-PPase spans 196–387 (WSMENYIEST…LGIPDYMVDR (192 aa)). 223–229 (SGGVDSS) contributes to the ATP binding site.

As to quaternary structure, homodimer.

It carries out the reaction XMP + L-glutamine + ATP + H2O = GMP + L-glutamate + AMP + diphosphate + 2 H(+). It participates in purine metabolism; GMP biosynthesis; GMP from XMP (L-Gln route): step 1/1. Functionally, catalyzes the synthesis of GMP from XMP. This is GMP synthase [glutamine-hydrolyzing] from Fusobacterium nucleatum subsp. nucleatum (strain ATCC 25586 / DSM 15643 / BCRC 10681 / CIP 101130 / JCM 8532 / KCTC 2640 / LMG 13131 / VPI 4355).